The chain runs to 395 residues: L-rhamnonate dehydratase (395 aa).

Positions 23 and 49 each coordinate substrate. Residues Asp-215, Glu-241, and Glu-269 each coordinate Mg(2+). The active-site Proton acceptor is His-319. Residue Glu-339 coordinates substrate.

The protein belongs to the mandelate racemase/muconate lactonizing enzyme family. RhamD subfamily. In terms of assembly, homooctamer; tetramer of dimers. Mg(2+) serves as cofactor.

The enzyme catalyses L-rhamnonate = 2-dehydro-3-deoxy-L-rhamnonate + H2O. Catalyzes the dehydration of L-rhamnonate to 2-keto-3-deoxy-L-rhamnonate (KDR). This chain is L-rhamnonate dehydratase, found in Delftia acidovorans (strain DSM 14801 / SPH-1).